Here is a 346-residue protein sequence, read N- to C-terminus: ATP-dependent 6-phosphofructokinase (346 aa).

ATP-binding positions include glycine 13, 76–77 (RL), and 106–109 (GEGT). Position 107 (glutamate 107) interacts with Mg(2+). Residues 129 to 131 (TID), arginine 166, 173 to 175 (MGR), glutamate 226, arginine 270, and 276 to 279 (HIQR) contribute to the substrate site. Aspartate 131 (proton acceptor) is an active-site residue.

It belongs to the phosphofructokinase type A (PFKA) family. Mixed-substrate PFK group III subfamily. As to quaternary structure, homodimer or homotetramer. Requires Mg(2+) as cofactor.

The protein resides in the cytoplasm. It carries out the reaction beta-D-fructose 6-phosphate + ATP = beta-D-fructose 1,6-bisphosphate + ADP + H(+). The protein operates within carbohydrate degradation; glycolysis; D-glyceraldehyde 3-phosphate and glycerone phosphate from D-glucose: step 3/4. In terms of biological role, catalyzes the phosphorylation of D-fructose 6-phosphate to fructose 1,6-bisphosphate by ATP, the first committing step of glycolysis. This is ATP-dependent 6-phosphofructokinase from Corynebacterium efficiens (strain DSM 44549 / YS-314 / AJ 12310 / JCM 11189 / NBRC 100395).